Consider the following 126-residue polypeptide: NADPH-dependent 7-cyano-7-deazaguanine reductase (126 aa).

The active-site Thioimide intermediate is the cysteine 40. Aspartate 47 functions as the Proton donor in the catalytic mechanism. Substrate contacts are provided by residues 62–64 and 81–82; these read IEL and HE.

It belongs to the GTP cyclohydrolase I family. QueF type 1 subfamily.

The protein localises to the cytoplasm. The catalysed reaction is 7-aminomethyl-7-carbaguanine + 2 NADP(+) = 7-cyano-7-deazaguanine + 2 NADPH + 3 H(+). The protein operates within tRNA modification; tRNA-queuosine biosynthesis. In terms of biological role, catalyzes the NADPH-dependent reduction of 7-cyano-7-deazaguanine (preQ0) to 7-aminomethyl-7-deazaguanine (preQ1). The polypeptide is NADPH-dependent 7-cyano-7-deazaguanine reductase (Campylobacter jejuni subsp. doylei (strain ATCC BAA-1458 / RM4099 / 269.97)).